The primary structure comprises 323 residues: Queuosine 5'-phosphate N-glycosylase/hydrolase (323 aa).

Positions 72, 93, 199, 229, 231, 298, 302, and 306 each coordinate queuosine 5'-phosphate. D231 (nucleophile or transition state stabilizer) is an active-site residue.

It belongs to the QNG1 protein family. Monomer.

The catalysed reaction is queuosine 5'-phosphate + H2O = queuine + D-ribose 5-phosphate. Its function is as follows. Catalyzes the hydrolysis of queuosine 5'-phosphate, releasing the nucleobase queuine (q). Is likely required for salvage of queuine from exogenous queuosine (Q) that is imported and then converted to queuosine 5'-phosphate intracellularly. In vitro, can also catalyze the release of the q base directly from Q as substrate; however, Q may not be the biologically relevant substrate. Shows a very low activity on queuosine 3',5'-diphosphate, and cannot release q from queuosine 3'-phosphate and from the 5'-nucleotides AMP, UMP, CMP or GMP, indicating specificity for the queuine base. The sequence is that of Queuosine 5'-phosphate N-glycosylase/hydrolase from Sphaerobacter thermophilus (strain ATCC 49802 / DSM 20745 / KCCM 41009 / NCIMB 13125 / S 6022).